A 322-amino-acid polypeptide reads, in one-letter code: uncharacterized protein (322 aa).

Residues 1–63 form a disordered region; the sequence is MFKIRKRSVP…DEASSSDSHY (63 aa). A compositionally biased stretch (basic and acidic residues) spans 34 to 49; that stretch reads FVDDHGKPIAEYRDFP. The C3H1-type zinc finger occupies 245–274; the sequence is WKVDRICTYYINRPDKCTRGDNCRFKHDDV. The disordered stretch occupies residues 278 to 322; it reads HRQKEIQSSRNQSWHHRTSSHKYSSENSDHRGYRRHRSRSPHARQ. The span at 309–322 shows a compositional bias: basic residues; the sequence is GYRRHRSRSPHARQ.

This is an uncharacterized protein from Caenorhabditis elegans.